Reading from the N-terminus, the 84-residue chain is Large ribosomal subunit protein bL27 (84 aa).

Belongs to the bacterial ribosomal protein bL27 family.

This is Large ribosomal subunit protein bL27 from Buchnera aphidicola subsp. Schizaphis graminum (strain Sg).